A 444-amino-acid polypeptide reads, in one-letter code: N-succinylarginine dihydrolase (444 aa).

Substrate is bound by residues 19–28, Asn110, and 137–138; these read SGLSVGNIAS and HR. The active site involves Glu174. Arg214 lines the substrate pocket. His250 is a catalytic residue. Substrate-binding residues include Asp252 and Asn362. Residue Cys368 is the Nucleophile of the active site.

This sequence belongs to the succinylarginine dihydrolase family. Homodimer.

It carries out the reaction N(2)-succinyl-L-arginine + 2 H2O + 2 H(+) = N(2)-succinyl-L-ornithine + 2 NH4(+) + CO2. It functions in the pathway amino-acid degradation; L-arginine degradation via AST pathway; L-glutamate and succinate from L-arginine: step 2/5. In terms of biological role, catalyzes the hydrolysis of N(2)-succinylarginine into N(2)-succinylornithine, ammonia and CO(2). The chain is N-succinylarginine dihydrolase from Aliivibrio fischeri (strain MJ11) (Vibrio fischeri).